The following is a 527-amino-acid chain: Acyl-coenzyme A thioesterase 4, mitochondrial (527 aa).

Residues Met-1 to Phe-75 constitute a mitochondrion transit peptide. HotDog ACOT-type domains follow at residues Ile-172–Lys-294 and Lys-370–Ala-487.

This sequence belongs to the acyl coenzyme A hydrolase family. Mostly expressed at low levels in glandular trichomes (lupulin glands), and, to a lower extent, in stems, leaves, flowers and cones.

Its subcellular location is the mitochondrion. It catalyses the reaction 2-methylpropanoyl-CoA + H2O = 2-methylpropanoate + CoA + H(+). The enzyme catalyses propanoyl-CoA + H2O = propanoate + CoA + H(+). It carries out the reaction octanoyl-CoA + H2O = octanoate + CoA + H(+). The catalysed reaction is butanoyl-CoA + H2O = butanoate + CoA + H(+). It catalyses the reaction 3-methylbutanoyl-CoA + H2O = 3-methylbutanoate + CoA + H(+). The enzyme catalyses 2-methylbutanoyl-CoA + H2O = 2-methylbutanoate + CoA + H(+). In terms of biological role, acyl-CoA thioesterases are a group of enzymes that catalyze the hydrolysis of acyl-CoAs to the free fatty acid and coenzyme A (CoASH), providing the potential to regulate intracellular levels of acyl-CoAs, free fatty acids and CoASH. Active on acyl CoAs with short chains (propanoyl-CoA and butanoyl-CoA), branched short chains (2-methylpropanoyl-CoA, 2-methylbutanoyl-CoA and 3-methylbutanoyl-CoA) and medium chains (octanoyl-CoA). The chain is Acyl-coenzyme A thioesterase 4, mitochondrial from Humulus lupulus (European hop).